A 72-amino-acid polypeptide reads, in one-letter code: Translation initiation factor IF-1 (72 aa).

In terms of domain architecture, S1-like spans 1-72 (MAKEDTLEFP…SKGRINYRFK (72 aa)).

The protein belongs to the IF-1 family. As to quaternary structure, component of the 30S ribosomal translation pre-initiation complex which assembles on the 30S ribosome in the order IF-2 and IF-3, IF-1 and N-formylmethionyl-tRNA(fMet); mRNA recruitment can occur at any time during PIC assembly.

It localises to the cytoplasm. One of the essential components for the initiation of protein synthesis. Stabilizes the binding of IF-2 and IF-3 on the 30S subunit to which N-formylmethionyl-tRNA(fMet) subsequently binds. Helps modulate mRNA selection, yielding the 30S pre-initiation complex (PIC). Upon addition of the 50S ribosomal subunit IF-1, IF-2 and IF-3 are released leaving the mature 70S translation initiation complex. The sequence is that of Translation initiation factor IF-1 from Cereibacter sphaeroides (strain ATCC 17029 / ATH 2.4.9) (Rhodobacter sphaeroides).